The sequence spans 288 residues: Probable ketoamine kinase VV1_2562 (288 aa).

ATP is bound at residue 92-94 (NFL). D195 serves as the catalytic Proton acceptor.

This sequence belongs to the fructosamine kinase family.

Ketoamine kinase that phosphorylates ketoamines on the third carbon of the sugar moiety to generate ketoamine 3-phosphate. The chain is Probable ketoamine kinase VV1_2562 from Vibrio vulnificus (strain CMCP6).